The chain runs to 150 residues: Large ribosomal subunit protein bL9 (150 aa).

Belongs to the bacterial ribosomal protein bL9 family.

In terms of biological role, binds to the 23S rRNA. This chain is Large ribosomal subunit protein bL9, found in Burkholderia ambifaria (strain MC40-6).